A 174-amino-acid polypeptide reads, in one-letter code: Amino-acid acetyltransferase (174 aa).

One can recognise an N-acetyltransferase domain in the interval 10-148 (PVVRRARTSD…VFDEMCRSYD (139 aa)).

The protein belongs to the acetyltransferase family. As to quaternary structure, homodimer and homotetramer.

The catalysed reaction is L-glutamate + acetyl-CoA = N-acetyl-L-glutamate + CoA + H(+). It functions in the pathway amino-acid biosynthesis; L-arginine biosynthesis; N(2)-acetyl-L-ornithine from L-glutamate: step 1/4. Its activity is regulated as follows. Inhibited by L-arginine. Functionally, catalyzes the conversion of L-glutamate to alpha-N-acetyl-L-glutamate. L-glutamine is a significantly better substrate compared to L-glutamate. This is Amino-acid acetyltransferase (argA) from Mycobacterium tuberculosis (strain ATCC 25618 / H37Rv).